A 304-amino-acid polypeptide reads, in one-letter code: Thyroxine 5-deiodinase (304 aa).

The tract at residues M1 to P23 is disordered. Residues M1–S44 are Cytoplasmic-facing. Residues C45 to I67 form a helical; Signal-anchor for type II membrane protein membrane-spanning segment. Over R68 to V304 the chain is Extracellular. Residues G78–P99 are disordered. A compositionally biased stretch (acidic residues) spans P82–P95. U170 is an active-site residue. Residue U170 is a non-standard amino acid, selenocysteine.

The protein belongs to the iodothyronine deiodinase family. In terms of assembly, monomer. Homodimer. May undergo minor heretodimerization with DIO1 and DIO2. In terms of tissue distribution, expressed in placenta and several fetal tissues.

Its subcellular location is the cell membrane. It localises to the endosome membrane. The catalysed reaction is 3,3',5'-triiodo-L-thyronine + iodide + A + H(+) = L-thyroxine + AH2. It carries out the reaction 3,3'-diiodo-L-thyronine + iodide + A + H(+) = 3,3',5-triiodo-L-thyronine + AH2. It catalyses the reaction 3-iodo-L-thyronine + iodide + A + H(+) = 3,5-diiodo-L-thyronine + AH2. The enzyme catalyses L-thyronine + iodide + A + H(+) = 3-iodo-L-thyronine + AH2. The catalysed reaction is 3',5'-diiodo-L-thyronine + iodide + A + H(+) = 3,3',5'-triiodo-L-thyronine + AH2. It carries out the reaction 3'-iodo-L-thyronine + iodide + A + H(+) = 3,3'-diiodo-L-thyronine + AH2. It catalyses the reaction 3,3',5'-triiodothyronamine + iodide + A + H(+) = 3,3',5,5'-tetraiodothyronamine + AH2. The enzyme catalyses 3',5'-diiodothyronamine + iodide + A + H(+) = 3,3',5'-triiodothyronamine + AH2. The catalysed reaction is 3,3'-diiodothyronamine + iodide + A + H(+) = 3,3',5-triiodothyronamine + AH2. It carries out the reaction 3-iodothyronamine + iodide + A + H(+) = 3,5-diiodothyronamine + AH2. It catalyses the reaction 3'-iodothyronamine + iodide + A + H(+) = 3,3'-diiodothyronamine + AH2. The enzyme catalyses thyronamine + iodide + A + H(+) = 3-iodothyronamine + AH2. Functionally, plays a crucial role in the metabolism of thyroid hormones (TH) and has specific roles in TH activation and inactivation by deiodination. Catalyzes the deiodination of L-thyroxine (T4) to 3,3',5'-triiodothyronine (rT3), 3,5,3'-triiodothyronine (T3) to 3,3'-diiodothyronine (3,3'-T2), 3,5-diiodothyronine (3,5-T2) to 3-monoiodothyronine (3-T1), rT3 to 3',5'-diiodothyronine (3',5'-T2) and 3,3'-T2 to 3'-monoiodothyronine (3'-T1) via inner-ring deiodination (IRD). Catalyzes the deiodination of 3-T1 to L-thyronine (T0) via outer-ring deiodination (ORD). Catalyzes the tyrosyl ring deiodinations of 3,3',5,5'-tetraiodothyronamine, 3,3',5'-triiodothyronamine, 3,5,3'-triiodothyronamine, 3,5-diiodothyronamine, 3,3'-diiodothyronamine and 3-iodothyronamine. In Homo sapiens (Human), this protein is Thyroxine 5-deiodinase (DIO3).